The sequence spans 62 residues: Sperm histone (62 aa).

Residues 1–62 (MARYRRSRTR…GSRRRRRRRY (62 aa)) are disordered. Threonine 9 carries the phosphothreonine modification.

Belongs to the protamine P1 family. Testis.

The protein localises to the nucleus. It localises to the chromosome. Protamines substitute for histones in the chromatin of sperm during the haploid phase of spermatogenesis. They compact sperm DNA into a highly condensed, stable and inactive complex. The protein is Sperm histone of Gallus gallus (Chicken).